The chain runs to 399 residues: UDP-N-acetylglucosamine--N-acetylmuramyl-(pentapeptide) pyrophosphoryl-undecaprenol N-acetylglucosamine transferase (399 aa).

Residues 1-31 form a disordered region; the sequence is MTSRFGHSQHPRRGRSARARAGRREGVQSNF. The segment covering 7 to 21 has biased composition (basic residues); that stretch reads HSQHPRRGRSARARA. UDP-N-acetyl-alpha-D-glucosamine contacts are provided by residues 58–60, Asn170, Arg206, Ser234, Ile288, and Gln333; that span reads TGG.

The protein belongs to the glycosyltransferase 28 family. MurG subfamily.

It localises to the cell inner membrane. It carries out the reaction di-trans,octa-cis-undecaprenyl diphospho-N-acetyl-alpha-D-muramoyl-L-alanyl-D-glutamyl-meso-2,6-diaminopimeloyl-D-alanyl-D-alanine + UDP-N-acetyl-alpha-D-glucosamine = di-trans,octa-cis-undecaprenyl diphospho-[N-acetyl-alpha-D-glucosaminyl-(1-&gt;4)]-N-acetyl-alpha-D-muramoyl-L-alanyl-D-glutamyl-meso-2,6-diaminopimeloyl-D-alanyl-D-alanine + UDP + H(+). It functions in the pathway cell wall biogenesis; peptidoglycan biosynthesis. Its function is as follows. Cell wall formation. Catalyzes the transfer of a GlcNAc subunit on undecaprenyl-pyrophosphoryl-MurNAc-pentapeptide (lipid intermediate I) to form undecaprenyl-pyrophosphoryl-MurNAc-(pentapeptide)GlcNAc (lipid intermediate II). In Acidovorax sp. (strain JS42), this protein is UDP-N-acetylglucosamine--N-acetylmuramyl-(pentapeptide) pyrophosphoryl-undecaprenol N-acetylglucosamine transferase.